The chain runs to 289 residues: Diaminopimelate epimerase (289 aa).

Residues N11 and N78 each coordinate substrate. Catalysis depends on C87, which acts as the Proton donor. Residues 88–89, N163, N199, and 217–218 each bind substrate; these read GN and ER. The Proton acceptor role is filled by C226. Residue 227–228 participates in substrate binding; that stretch reads GT.

The protein belongs to the diaminopimelate epimerase family. Homodimer.

It localises to the cytoplasm. It catalyses the reaction (2S,6S)-2,6-diaminopimelate = meso-2,6-diaminopimelate. The protein operates within amino-acid biosynthesis; L-lysine biosynthesis via DAP pathway; DL-2,6-diaminopimelate from LL-2,6-diaminopimelate: step 1/1. Its function is as follows. Catalyzes the stereoinversion of LL-2,6-diaminopimelate (L,L-DAP) to meso-diaminopimelate (meso-DAP), a precursor of L-lysine and an essential component of the bacterial peptidoglycan. The polypeptide is Diaminopimelate epimerase (Mycobacterium bovis (strain ATCC BAA-935 / AF2122/97)).